The primary structure comprises 185 residues: Ribosome-recycling factor (185 aa).

It belongs to the RRF family.

The protein localises to the cytoplasm. Responsible for the release of ribosomes from messenger RNA at the termination of protein biosynthesis. May increase the efficiency of translation by recycling ribosomes from one round of translation to another. This is Ribosome-recycling factor from Laribacter hongkongensis (strain HLHK9).